The chain runs to 117 residues: Large ribosomal subunit protein uL18 (117 aa).

The protein belongs to the universal ribosomal protein uL18 family. In terms of assembly, part of the 50S ribosomal subunit; part of the 5S rRNA/L5/L18/L25 subcomplex. Contacts the 5S and 23S rRNAs.

This is one of the proteins that bind and probably mediate the attachment of the 5S RNA into the large ribosomal subunit, where it forms part of the central protuberance. This Sphingopyxis alaskensis (strain DSM 13593 / LMG 18877 / RB2256) (Sphingomonas alaskensis) protein is Large ribosomal subunit protein uL18.